The chain runs to 122 residues: Large ribosomal subunit protein uL14 (122 aa).

Belongs to the universal ribosomal protein uL14 family. As to quaternary structure, part of the 50S ribosomal subunit. Forms a cluster with proteins L3 and L19. In the 70S ribosome, L14 and L19 interact and together make contacts with the 16S rRNA in bridges B5 and B8.

Functionally, binds to 23S rRNA. Forms part of two intersubunit bridges in the 70S ribosome. The polypeptide is Large ribosomal subunit protein uL14 (Bacillus velezensis (strain DSM 23117 / BGSC 10A6 / LMG 26770 / FZB42) (Bacillus amyloliquefaciens subsp. plantarum)).